We begin with the raw amino-acid sequence, 518 residues long: Calcium-dependent protein kinase 1 (518 aa).

Residues 1–10 are compositionally biased toward basic residues; that stretch reads MGNRTSRHHR. The tract at residues 1-49 is disordered; the sequence is MGNRTSRHHRAAPEQPPPQPKPKPQPQQQQQQWPRPQQPTPPPAAAPDA. Glycine 2 carries the N-myristoyl glycine lipid modification. Over residues 14 to 25 the composition is skewed to pro residues; it reads EQPPPQPKPKPQ. Residues 26-35 are compositionally biased toward low complexity; it reads PQQQQQQWPR. Residues 36–45 show a composition bias toward pro residues; the sequence is PQQPTPPPAA. In terms of domain architecture, Protein kinase spans 66–324; that stretch reads YTFGRELGRG…SAEILNHPWI (259 aa). Residues 72–80 and lysine 95 contribute to the ATP site; that span reads LGRGQFGVT. Residue aspartate 190 is the Proton acceptor of the active site. Residues 330-360 are autoinhibitory domain; it reads APDKPLDITVISRMKQFRAMNKLKKVALKVV. EF-hand domains lie at 367-402, 403-438, 439-474, and 475-509; these read EEIT…LGTK, ISES…MNRL, EKED…YDMG, and DDKT…NNPE. Ca(2+)-binding residues include aspartate 380, aspartate 382, serine 384, threonine 386, glutamate 391, aspartate 416, aspartate 418, asparagine 420, threonine 422, glutamate 427, aspartate 452, aspartate 454, serine 456, tyrosine 458, glutamate 463, aspartate 487, aspartate 489, aspartate 491, arginine 493, and glutamate 498.

Belongs to the protein kinase superfamily. Ser/Thr protein kinase family. CDPK subfamily. In terms of tissue distribution, expressed in roots and leaf blades.

It is found in the membrane. It carries out the reaction L-seryl-[protein] + ATP = O-phospho-L-seryl-[protein] + ADP + H(+). The catalysed reaction is L-threonyl-[protein] + ATP = O-phospho-L-threonyl-[protein] + ADP + H(+). Activated by calcium. Autophosphorylation may play an important role in the regulation of the kinase activity. In terms of biological role, may play a role in signal transduction pathways that involve calcium as a second messenger. The protein is Calcium-dependent protein kinase 1 of Oryza sativa subsp. japonica (Rice).